The sequence spans 66 residues: Beta-toxin Cll1m (66 aa).

Residues 1–66 form the LCN-type CS-alpha/beta domain; sequence KEGYIVNLST…VWPLPKKTCT (66 aa). 4 cysteine pairs are disulfide-bonded: cysteine 12/cysteine 65, cysteine 16/cysteine 41, cysteine 25/cysteine 46, and cysteine 29/cysteine 48. Threonine 66 carries the threonine amide modification.

It belongs to the long (4 C-C) scorpion toxin superfamily. Sodium channel inhibitor family. Beta subfamily. In terms of tissue distribution, expressed by the venom gland.

It localises to the secreted. Its function is as follows. Beta toxins bind voltage-independently at site-4 of sodium channels (Nav) and shift the voltage of activation toward more negative potentials thereby affecting sodium channel activation and promoting spontaneous and repetitive firing. In Centruroides limpidus (Mexican scorpion), this protein is Beta-toxin Cll1m.